The following is a 98-amino-acid chain: NADH-ubiquinone oxidoreductase chain 4L (98 aa).

The next 3 membrane-spanning stretches (helical) occupy residues 1–21 (MSMV…GLLM), 29–49 (SLLC…VAIL), and 61–81 (IILL…LVMV).

This sequence belongs to the complex I subunit 4L family. As to quaternary structure, core subunit of respiratory chain NADH dehydrogenase (Complex I) which is composed of 45 different subunits.

The protein resides in the mitochondrion inner membrane. The catalysed reaction is a ubiquinone + NADH + 5 H(+)(in) = a ubiquinol + NAD(+) + 4 H(+)(out). Its function is as follows. Core subunit of the mitochondrial membrane respiratory chain NADH dehydrogenase (Complex I) which catalyzes electron transfer from NADH through the respiratory chain, using ubiquinone as an electron acceptor. Part of the enzyme membrane arm which is embedded in the lipid bilayer and involved in proton translocation. The sequence is that of NADH-ubiquinone oxidoreductase chain 4L (MT-ND4L) from Felis catus (Cat).